A 154-amino-acid polypeptide reads, in one-letter code: 17 kDa surface antigen (154 aa).

Residues 1–19 (MKLLSKIMIIALAASMLQA) form the signal peptide. Cysteine 20 carries N-palmitoyl cysteine lipidation. A lipid anchor (S-diacylglycerol cysteine) is attached at cysteine 20.

The protein belongs to the rickettsiale 17 kDa surface antigen family.

The protein resides in the cell outer membrane. This is 17 kDa surface antigen (omp) from Rickettsia montanensis.